A 229-amino-acid polypeptide reads, in one-letter code: MSDSQEIPYHNQLKNRFRGYFPVIIDVETAGFDAKKDALLELAAITLKMDENGYLHPDQKCHFHIKPFEGANINPESLKFNGIDIHNPLRGAVSELDAITGLFQMVRRGQKDADCQRSIIVAHNATFDQSFVMAAAERTGVKRNPFHPFGMFDTASLAGLMFGQTVLVKACQAAKIPFDGKQAHSALYDTERTAKLFCYMVNHLKDLGGFPHIASELEQEKTTEKETAL.

The Exonuclease domain maps to 23–197 (VIIDVETAGF…YDTERTAKLF (175 aa)). Mg(2+)-binding residues include Asp26, Glu28, His184, and Asp189. The active-site Proton donor/acceptor is the His184.

This sequence belongs to the RNase T family. As to quaternary structure, homodimer. Mg(2+) serves as cofactor.

In terms of biological role, trims short 3' overhangs of a variety of RNA species, leaving a one or two nucleotide 3' overhang. Responsible for the end-turnover of tRNA: specifically removes the terminal AMP residue from uncharged tRNA (tRNA-C-C-A). Also appears to be involved in tRNA biosynthesis. This Haemophilus influenzae (strain 86-028NP) protein is Ribonuclease T.